A 908-amino-acid chain; its full sequence is WD repeat-containing protein 44 (908 aa).

Residues Met-1 to Lys-163 form a binding activity region. A phosphoserine mark is found at Ser-17, Ser-40, Ser-61, Ser-71, Ser-86, and Ser-116. 2 stretches are compositionally biased toward polar residues: residues Gln-108 to Ala-120 and Asn-148 to Asp-157. Disordered stretches follow at residues Gln-108–Gln-158, Ala-202–Ile-273, Thr-309–Thr-341, Val-391–Gln-418, and Asp-454–Tyr-474. Phosphothreonine is present on residues Thr-151 and Thr-211. Residues Pro-203–Pro-249 form an important for interaction with ARHGAP26 AND ARHGAP10 region. Residues Pro-225–Pro-248 show a composition bias toward pro residues. At Ser-254 the chain carries Phosphoserine. Positions Ser-254 to Lys-270 are enriched in basic and acidic residues. Phosphothreonine is present on Thr-263. Residues Val-326–Glu-339 are important for interaction with RAB11A. A phosphoserine mark is found at Ser-334 and Ser-336. Thr-341 and Thr-396 each carry phosphothreonine. Phosphoserine is present on residues Ser-398, Ser-465, Ser-466, and Ser-467. The segment covering Asp-462–Gly-471 has biased composition (acidic residues). Tyr-474 is subject to Phosphotyrosine. One copy of the WD 1 repeat lies at Glu-504–Asn-543. A disordered region spans residues Glu-552–Asn-587. A phosphoserine mark is found at Ser-556 and Ser-560. Over residues Ser-556–Lys-568 the composition is skewed to low complexity. 5 WD repeats span residues Gly-600–Cys-638, Gln-640–Trp-680, Gly-685–Gln-724, Lys-735–Lys-774, and Val-779–Thr-818.

As to quaternary structure, interacts preferentially with the GTP-bound form of RAB11 when membrane-associated. Interacts with GRAF1/ARHGAP26 or GRAF2/ARHGAP10; the interaction connects the endoplasmic reticulum (ER) with the endosomal tubule. Interacts with VAPA (via MSP domain) or VAPB (via MSP domain); the interaction connects the ER with the endosomal tubule. Does not bind to other Rab and Rho small G proteins. Phosphorylated by ATK1; the phosphorylation stabilizes its interaction with RAB11A and RAB11B. Expressed in heart; brain; spleen; lung; liver; muscle and kidney.

It is found in the cytoplasm. Its subcellular location is the cytosol. It localises to the perinuclear region. The protein resides in the endosome membrane. The protein localises to the golgi apparatus. It is found in the trans-Golgi network. Its function is as follows. Downstream effector for Rab11 which regulates Rab11 intracellular membrane trafficking functions such as endocytic recycling, intracellular ciliogenesis and protein export. ATK1-mediated phosphorylation of WDR44 induces binding to Rab11 which activates endocytic recycling of transferrin receptor back to the plasma membrane. When bound to Rab11, prevents the formation of the ciliogenic Rab11-Rabin8/RAB3IP-RAB11FIP3 complex, therefore inhibiting preciliary trafficking and ciliogenesis. May participate in neo-synthesized protein export by connecting the endoplasmic reticulum (ER) with the endosomal tubule via direct interactions with the integral ER proteins VAPA or VAPB and the endosomal protein GRAFs (GRAF1/ARHGAP26 or GRAF2/ARHGAP10), which facilitates the transfer of proteins such as E-cadherin, MPP14 and CFTR into a Rab8-Rab10-Rab11-dependent export route. The chain is WD repeat-containing protein 44 from Rattus norvegicus (Rat).